A 317-amino-acid chain; its full sequence is Acetyl-coenzyme A carboxylase carboxyl transferase subunit alpha (317 aa).

Residues 40–293 (LEKRSADALK…GDIIAASLRS (254 aa)) form the CoA carboxyltransferase C-terminal domain.

The protein belongs to the AccA family. In terms of assembly, acetyl-CoA carboxylase is a heterohexamer composed of biotin carboxyl carrier protein (AccB), biotin carboxylase (AccC) and two subunits each of ACCase subunit alpha (AccA) and ACCase subunit beta (AccD).

It is found in the cytoplasm. The catalysed reaction is N(6)-carboxybiotinyl-L-lysyl-[protein] + acetyl-CoA = N(6)-biotinyl-L-lysyl-[protein] + malonyl-CoA. Its pathway is lipid metabolism; malonyl-CoA biosynthesis; malonyl-CoA from acetyl-CoA: step 1/1. Functionally, component of the acetyl coenzyme A carboxylase (ACC) complex. First, biotin carboxylase catalyzes the carboxylation of biotin on its carrier protein (BCCP) and then the CO(2) group is transferred by the carboxyltransferase to acetyl-CoA to form malonyl-CoA. This Brucella melitensis biotype 2 (strain ATCC 23457) protein is Acetyl-coenzyme A carboxylase carboxyl transferase subunit alpha.